Here is a 220-residue protein sequence, read N- to C-terminus: ATP-dependent Clp protease proteolytic subunit (220 aa).

The active-site Nucleophile is the Ser-125. Residue His-150 is part of the active site.

It belongs to the peptidase S14 family. In terms of assembly, fourteen ClpP subunits assemble into 2 heptameric rings which stack back to back to give a disk-like structure with a central cavity, resembling the structure of eukaryotic proteasomes.

Its subcellular location is the cytoplasm. It catalyses the reaction Hydrolysis of proteins to small peptides in the presence of ATP and magnesium. alpha-casein is the usual test substrate. In the absence of ATP, only oligopeptides shorter than five residues are hydrolyzed (such as succinyl-Leu-Tyr-|-NHMec, and Leu-Tyr-Leu-|-Tyr-Trp, in which cleavage of the -Tyr-|-Leu- and -Tyr-|-Trp bonds also occurs).. Functionally, cleaves peptides in various proteins in a process that requires ATP hydrolysis. Has a chymotrypsin-like activity. Plays a major role in the degradation of misfolded proteins. This Bacteroides thetaiotaomicron (strain ATCC 29148 / DSM 2079 / JCM 5827 / CCUG 10774 / NCTC 10582 / VPI-5482 / E50) protein is ATP-dependent Clp protease proteolytic subunit.